A 605-amino-acid polypeptide reads, in one-letter code: METPQMNAIQEEDNLSPEVAFQTPKLNDSDASSFSLSNMNAVGNVDGIPSQNRTFFASPRPSSLFYSAKEGNNSSSSIIYNPSFTFGENASSNANINEAALMKGKGNEGRRQSLKYIPAPKLVPPPPRTRSPVRGISPDAGSSKRSSMTLDSPFNFTTSTLQPHQQTPPSSAASRTSFRKGHRYKHSSVSMNFFQEPEVKIPLNIAKSLPIPDFNDLLSNLPWPKAYIQLSIAALQIFACLITFQVGHLYSWSNFITLSHFITYDIIGSLVIIFVENLSQFQVWFTGTITFPFGLNRIDVLLSFALAVSLCFVGLDLLFHIIEEFIVLFVESGSSLTNNHDHDEINEQIPHSHIANANDSQNENITLWYSILMINLVLSTLSLYKTFYANKYSNLKTKNPIITITYTAYLFIYPLLLDLLSSISDYLATLVISSLILWHGLTIARWTSTVLLMGFSTTSLSNSALFNNNDSTDTTAHTQQVESKAAKEKPSVRPRSMSSLPIATKNTKIRKTGFLNSAGFTENPTTIKNMIKDQIERLSEFKSRYILNYDDIVISKVNFTLYVVLIKITMKGGSDDDELMLRLAIDKCIQTSIPTCETTIDIDRI.

Over 1–225 (METPQMNAIQ…DLLSNLPWPK (225 aa)) the chain is Cytoplasmic. A phosphoserine mark is found at Ser-16 and Ser-131. The segment at 118–178 (PAPKLVPPPP…PSSAASRTSF (61 aa)) is disordered. Residues 143-176 (SKRSSMTLDSPFNFTTSTLQPHQQTPPSSAASRT) are compositionally biased toward polar residues. A helical transmembrane segment spans residues 226 to 246 (AYIQLSIAALQIFACLITFQV). The Lumenal segment spans residues 247 to 254 (GHLYSWSN). A helical membrane pass occupies residues 255 to 275 (FITLSHFITYDIIGSLVIIFV). Residues 276–287 (ENLSQFQVWFTG) are Cytoplasmic-facing. A helical transmembrane segment spans residues 288–308 (TITFPFGLNRIDVLLSFALAV). A topological domain (lumenal) is located at residue Ser-309. A helical transmembrane segment spans residues 310-330 (LCFVGLDLLFHIIEEFIVLFV). Topologically, residues 331-363 (ESGSSLTNNHDHDEINEQIPHSHIANANDSQNE) are cytoplasmic. Residues 364–384 (NITLWYSILMINLVLSTLSLY) form a helical membrane-spanning segment. Topologically, residues 385-399 (KTFYANKYSNLKTKN) are lumenal. Residues 400-420 (PIITITYTAYLFIYPLLLDLL) form a helical membrane-spanning segment. The Cytoplasmic segment spans residues 421–422 (SS). The chain crosses the membrane as a helical span at residues 423–443 (ISDYLATLVISSLILWHGLTI). The Lumenal portion of the chain corresponds to 444-545 (ARWTSTVLLM…ERLSEFKSRY (102 aa)). Residues 473–482 (DTTAHTQQVE) show a composition bias toward polar residues. Positions 473 to 497 (DTTAHTQQVESKAAKEKPSVRPRSM) are disordered. Residue Ser-498 is modified to Phosphoserine. A helical transmembrane segment spans residues 546 to 566 (ILNYDDIVISKVNFTLYVVLI). The Cytoplasmic segment spans residues 567–605 (KITMKGGSDDDELMLRLAIDKCIQTSIPTCETTIDIDRI).

The protein localises to the endoplasmic reticulum membrane. The sequence is that of Protein ZRG17 (ZRG17) from Saccharomyces cerevisiae (strain ATCC 204508 / S288c) (Baker's yeast).